The chain runs to 240 residues: MSDIKDGNNDHLVQSDDPEHPANLIPALCRNFYSHGWVTGTGGGASIKRDNHIFIAPSGVQKELIQPHNIFVLSFPTPKYPPSARQYIRKPLKLNPSACTPLFLAAFERGAGCCIHTHSQWAVLVTLLVEREKGPEGCFEISNIEQIKGIPRGKGKGMMGFFDTLKIPIIENTAFEEDLTQSLEEAMEMYPDTYAVLVRRHGIYVWGDDVAKAKTQCESLDYLFQLAVEMHRLGLPWVKS.

Cys-99 is a binding site for substrate. Residues His-116 and His-118 each contribute to the Zn(2+) site. The active-site Proton donor/acceptor is the Glu-145. Residue His-201 participates in Zn(2+) binding.

This sequence belongs to the aldolase class II family. MtnB subfamily. The cofactor is Zn(2+).

The protein resides in the cytoplasm. It carries out the reaction 5-(methylsulfanyl)-D-ribulose 1-phosphate = 5-methylsulfanyl-2,3-dioxopentyl phosphate + H2O. It functions in the pathway amino-acid biosynthesis; L-methionine biosynthesis via salvage pathway; L-methionine from S-methyl-5-thio-alpha-D-ribose 1-phosphate: step 2/6. In terms of biological role, catalyzes the dehydration of methylthioribulose-1-phosphate (MTRu-1-P) into 2,3-diketo-5-methylthiopentyl-1-phosphate (DK-MTP-1-P). The chain is Methylthioribulose-1-phosphate dehydratase from Paracoccidioides lutzii (strain ATCC MYA-826 / Pb01) (Paracoccidioides brasiliensis).